Here is a 490-residue protein sequence, read N- to C-terminus: Cardiolipin synthase A (490 aa).

2 consecutive transmembrane segments (helical) span residues 20 to 40 and 49 to 69; these read LGLL…HAVL and IAWA…YLVF. PLD phosphodiesterase domains lie at 229–256 and 403–430; these read VNFR…GVEY and QPGF…DNRS. Residues histidine 234, lysine 236, aspartate 241, histidine 408, lysine 410, and aspartate 415 contribute to the active site.

It belongs to the phospholipase D family. Cardiolipin synthase subfamily. ClsA sub-subfamily.

It localises to the cell inner membrane. It carries out the reaction 2 a 1,2-diacyl-sn-glycero-3-phospho-(1'-sn-glycerol) = a cardiolipin + glycerol. Its function is as follows. Catalyzes the reversible phosphatidyl group transfer from one phosphatidylglycerol molecule to another to form cardiolipin (CL) (diphosphatidylglycerol) and glycerol. The protein is Cardiolipin synthase A of Pseudomonas aeruginosa (strain LESB58).